We begin with the raw amino-acid sequence, 212 residues long: Thymidylate kinase (212 aa).

Position 13–20 (13–20) interacts with ATP; the sequence is GLEGAGKS.

It belongs to the thymidylate kinase family.

The catalysed reaction is dTMP + ATP = dTDP + ADP. Phosphorylation of dTMP to form dTDP in both de novo and salvage pathways of dTTP synthesis. This is Thymidylate kinase from Legionella pneumophila (strain Paris).